We begin with the raw amino-acid sequence, 208 residues long: Peptidyl-tRNA hydrolase 2 (208 aa).

Residues 32 to 45 (SNASSTKKSSATLL) are compositionally biased toward low complexity. The segment at 32 to 81 (SNASSTKKSSATLLRSKEMKEGKLHNDTDEEESESEDESDEDEDIESTSL) is disordered. Residues 46–58 (RSKEMKEGKLHND) show a composition bias toward basic and acidic residues. Positions 59 to 77 (TDEEESESEDESDEDEDIE) are enriched in acidic residues. K152 is covalently cross-linked (Glycyl lysine isopeptide (Lys-Gly) (interchain with G-Cter in ubiquitin)).

It belongs to the PTH2 family.

It localises to the cytoplasm. The enzyme catalyses an N-acyl-L-alpha-aminoacyl-tRNA + H2O = an N-acyl-L-amino acid + a tRNA + H(+). The natural substrate for this enzyme may be peptidyl-tRNAs which drop off the ribosome during protein synthesis. The polypeptide is Peptidyl-tRNA hydrolase 2 (Saccharomyces cerevisiae (strain ATCC 204508 / S288c) (Baker's yeast)).